Consider the following 622-residue polypeptide: MATVKVIDFIQTPFDFLIVGGGTAGLVLAARLSEEPGIQVGVIEAGSLRLGDPKVDLPTGPGQMLGDPGYDWNFESIPQAGANAKAYHIPRGRMLGGSSGINFMSYNRPSAEDIDDWANKLGVKGWTWSELLPYFKRSENLEPIEPSASCPVSPKVHGTGGPIHTSIGPWQAPIEESLLAAFDEAARLQRPAEPYSGAHLGFYRSLFTLDRTSTPVRSYAVSGYYAPVMGRPNLKVLENAQVCRILLSDASDGIPVAEGVELHHAGARYAVSARREVILSAGSVQSPQLLELSGIGDPSVLEGAGIACRVANTDVGSNLQEHTMSAVSYECADGIMSVDSLFKDPALLEEHQSLYAKNHSGALSGSVSLMGFTPYSSLSTETQVDATMARIFDAPSVSGRLSQQNASYQRRQQEAVAARMQNRWSADIQFIGTPAYFNTAAGYASCAKIMSGPPVGYSACYSIVVSNMYPLSRGSVHVRTSNPMDAPAIDPGFLSHPVDVDVLAAGIVFADRVFRSTLLNGKVRRRVSPPAGLDLSNMDEARQFVRNHIVPYHHALGTCAMGQVVDEKLRVKGVRRLRVVDASVMPMQVSAAIMATVYAIAERASDIIKKDCGFGRRLRAHI.

Residues 23-24 (TA), 44-45 (EA), and 102-105 (NFMS) each bind FAD. The Proton acceptor role is filled by histidine 554. FAD contacts are provided by residues alanine 582 and 593–594 (IM).

It belongs to the GMC oxidoreductase family. Homodimer. FAD is required as a cofactor.

The protein operates within mycotoxin biosynthesis. Functionally, dehydrogenase; part of the gene cluster that mediates the biosynthesis of the mycotoxin citrinin, a hepato-nephrotoxic compound to humans due to inhibition of respiration complex III. The pathway begins with the synthesis of a keto-aldehyde intermediate by the citrinin PKS (pksCT) from successive condensations of 4 malonyl-CoA units, presumably with a simple acetyl-CoA starter unit. Release of the keto-aldehyde intermediate is consistent with the presence of the C-terminal reductive release domain. Mp11 collaborates with pksCT by catalyzing the hydrolysis of ACP-bound acyl intermediates to free the ACP from stalled intermediates. Mpl2 then catalyzes the oxidation of the C-12 methyl of the ketone intermediate to an alcohol intermediate which is further oxidized by the oxidoreductase mpl7 to produce a bisaldehyde intermediate. The fourth catalytic step is catalyzed by the mpl4 aldehyde dehydrogenase. The final transformation is the reduction of C-3 by mpl6 to provide the chemically stable citrinin nucleus. This chain is Dehydrogenase mpl7, found in Monascus purpureus (Red mold).